The sequence spans 399 residues: Fructose-1,6-bisphosphate aldolase/phosphatase (399 aa).

D11 acts as the Proton acceptor; for FBP phosphatase activity in catalysis. D11, H18, D52, and D53 together coordinate Mg(2+). Residue H18 participates in beta-D-fructose 1,6-bisphosphate binding. Residue H18 coordinates dihydroxyacetone phosphate. Y91 provides a ligand contact to beta-D-fructose 1,6-bisphosphate. Q95 contacts Mg(2+). G104–N105 provides a ligand contact to beta-D-fructose 1,6-bisphosphate. D132 is a binding site for Mg(2+). Beta-D-fructose 1,6-bisphosphate is bound at residue K133. A dihydroxyacetone phosphate-binding site is contributed by K133. The active-site Proton donor/acceptor; for FBP aldolase activity is the Y229. Mg(2+) is bound by residues K232, D233, and D234. Catalysis depends on K232, which acts as the Schiff-base intermediate with DHAP; for FBP aldolase activity. Beta-D-fructose 1,6-bisphosphate contacts are provided by residues Q242–S243, R266, D297, and Y358. R266 and D297 together coordinate dihydroxyacetone phosphate.

Belongs to the FBP aldolase/phosphatase family. As to quaternary structure, homooctamer; dimer of tetramers. Mg(2+) serves as cofactor.

The catalysed reaction is beta-D-fructose 1,6-bisphosphate + H2O = beta-D-fructose 6-phosphate + phosphate. It carries out the reaction beta-D-fructose 1,6-bisphosphate = D-glyceraldehyde 3-phosphate + dihydroxyacetone phosphate. It functions in the pathway carbohydrate biosynthesis; gluconeogenesis. Catalyzes two subsequent steps in gluconeogenesis: the aldol condensation of dihydroxyacetone phosphate (DHAP) and glyceraldehyde-3-phosphate (GA3P) to fructose-1,6-bisphosphate (FBP), and the dephosphorylation of FBP to fructose-6-phosphate (F6P). The sequence is that of Fructose-1,6-bisphosphate aldolase/phosphatase from Pyrobaculum neutrophilum (strain DSM 2338 / JCM 9278 / NBRC 100436 / V24Sta) (Thermoproteus neutrophilus).